The primary structure comprises 352 residues: MSKDNRLASILLQPVASSSGNCTEFHDSKLHTLQEELNFLPLEGVASNVCPPMFRGHKNYVFVLYCLNQVDLVTNLQDSTKRYYPLQIFKDCQLSSLVQKDFSHYFQLSRQKEGEDRNDSDTTLVNVVNSGVSRHRSQLLKMCIIPRICSFDKSNSKTYKLIQEYVNRFETVLTKFGPEKDFTKVYANWSKLIESFNELILHDLLVKWQQWSELTQPNATVHQNIPNVLRELVIKLTQRYFTFQPSYSCSIDEFTTILLNKNALSLLDVFRKPRKYKLNFGLWLDCQNGILIFTNGIVQMADEITSERVKSFVRPAHLLVLEDHSNDEAVKKLMFFTFSAILQCFTDEILNC.

In terms of assembly, interacts with MPS3.

It localises to the nucleus. Its subcellular location is the chromosome. The protein localises to the telomere. Required for telomeric clustering (bouquet stage) during meiosis 1 prophase, formation and efficient homolog pairing, meiosis 1 disjunction, and telomere deletion during meiosis. Also promotes meiotic recombination. The chain is Non-disjunction protein 1 (NDJ1) from Saccharomyces cerevisiae (strain ATCC 204508 / S288c) (Baker's yeast).